The following is a 498-amino-acid chain: Protein flp (498 aa).

Helical transmembrane passes span 6 to 26, 389 to 409, 433 to 453, and 471 to 491; these read LYFL…IYIT, FNIV…FSAY, LSLC…YLIL, and LALI…LLFL.

Its subcellular location is the cell membrane. In terms of biological role, its precise function is unknown. Has no penicillin-binding activity and is not involved in methicillin resistance. This is Protein flp (flp) from Staphylococcus aureus (strain NCTC 8325 / PS 47).